Here is a 133-residue protein sequence, read N- to C-terminus: Small ribosomal subunit protein uS11 (133 aa).

Residues 1–22 (MPPKTRGAVRKPRKKDKKNIAL) are disordered. Basic residues predominate over residues 7–17 (GAVRKPRKKDK).

The protein belongs to the universal ribosomal protein uS11 family. As to quaternary structure, part of the 30S ribosomal subunit. Interacts with proteins S7 and S18. Binds to IF-3.

Located on the platform of the 30S subunit, it bridges several disparate RNA helices of the 16S rRNA. Forms part of the Shine-Dalgarno cleft in the 70S ribosome. This Renibacterium salmoninarum (strain ATCC 33209 / DSM 20767 / JCM 11484 / NBRC 15589 / NCIMB 2235) protein is Small ribosomal subunit protein uS11.